Here is a 346-residue protein sequence, read N- to C-terminus: uncharacterized protein (346 aa).

This is an uncharacterized protein from Acanthamoeba polyphaga (Amoeba).